Here is a 153-residue protein sequence, read N- to C-terminus: Arginine repressor (153 aa).

It belongs to the ArgR family.

It is found in the cytoplasm. Its pathway is amino-acid biosynthesis; L-arginine biosynthesis [regulation]. Regulates arginine biosynthesis genes. In Glaesserella parasuis serovar 5 (strain SH0165) (Haemophilus parasuis), this protein is Arginine repressor.